Consider the following 442-residue polypeptide: O-methyltransferase pgmB (442 aa).

Position 291 (Asp291) interacts with S-adenosyl-L-methionine. His341 acts as the Proton acceptor in catalysis.

It belongs to the class I-like SAM-binding methyltransferase superfamily. Cation-independent O-methyltransferase family.

It participates in pigment biosynthesis. Its pathway is secondary metabolite biosynthesis. O-methyltransferase; part of the gene cluster that mediates the biosynthesis of pleosporalin A, ascomycone A, as well as a third cryptic naphthoquinone derived pigment, all responsible for the coloration of conidia. Specifically methylates position C-6 of the pgmA product 3-acetonyl-1,6,8-trihydroxy-2-naphthaldehyde to yield fusarubinaldehyde. The pathway begins with the biosynthesis of the cyclized heptaketide 3-acetonyl-1,6,8-trihydroxy-2-naphthaldehyde by the NR-PKS pgmA. The C-6 hydroxyl group is further methylated by the O-methyltransferase pgmB to yield fusarubinaldehyde which is in turn oxidized by the cytochrome P450 monooxygenase pgmC at C-9. The C-1 hydroxyl group is then methylated spontaneously. Although pgmE, pgmD and pgmH are essential for the production of pleosporalin A, it is not the case for the 2 other final products and it remains difficult to assign a specific function to each enzyme. PgmF and pgmG seem not to be involved in pigment biosynthesis although they were regulated by the cluster-specific transcription factor pgmR. The polypeptide is O-methyltransferase pgmB (Aspergillus terreus).